Consider the following 63-residue polypeptide: MGCISSKSTQTGKKEGKTAAERKAAWEGIRHGLPRRKTAEDKARRIELFKKFDKNNTGKLSME.

Residues 1–11 are compositionally biased toward polar residues; that stretch reads MGCISSKSTQT. A disordered region spans residues 1–23; sequence MGCISSKSTQTGKKEGKTAAERK. Basic and acidic residues predominate over residues 12–23; sequence GKKEGKTAAERK. The EF-hand domain maps to 40-63; sequence EDKARRIELFKKFDKNNTGKLSME. Ca(2+) contacts are provided by Asp53, Asn55, Thr57, and Lys59.

It belongs to the calflagin family.

The protein resides in the cell projection. It localises to the cilium. Its subcellular location is the flagellum. This chain is Putative flagellar calcium-binding protein (CABP), found in Crithidia fasciculata.